The sequence spans 53 residues: UPF0391 membrane protein KPK_4780 (53 aa).

Helical transmembrane passes span 4 to 24 (WGII…GGLA) and 30 to 47 (AAKI…VSLF).

It belongs to the UPF0391 family.

Its subcellular location is the cell membrane. This Klebsiella pneumoniae (strain 342) protein is UPF0391 membrane protein KPK_4780.